The sequence spans 826 residues: Lon protease (826 aa).

The Lon N-terminal domain occupies 26–221; sequence LPMLPVRDVV…AVNGFVSREV (196 aa). 373-380 is an ATP binding site; that stretch reads GPPGVGKT. In terms of domain architecture, Lon proteolytic spans 609–790; the sequence is EPQIGLATGL…NEVLEKALLP (182 aa). Residues Ser696 and Lys739 contribute to the active site. The segment at 788–826 is disordered; that stretch reads LLPAEKKKAPPKKKPPKKAAKPKAKKTQPKAKTTEAADK. Basic residues predominate over residues 796-816; sequence APPKKKPPKKAAKPKAKKTQP.

This sequence belongs to the peptidase S16 family. Homohexamer. Organized in a ring with a central cavity.

It is found in the cytoplasm. It carries out the reaction Hydrolysis of proteins in presence of ATP.. Its function is as follows. ATP-dependent serine protease that mediates the selective degradation of mutant and abnormal proteins as well as certain short-lived regulatory proteins. Required for cellular homeostasis and for survival from DNA damage and developmental changes induced by stress. Degrades polypeptides processively to yield small peptide fragments that are 5 to 10 amino acids long. Binds to DNA in a double-stranded, site-specific manner. This chain is Lon protease, found in Desulfatibacillum aliphaticivorans.